The chain runs to 297 residues: HTH-type transcriptional regulator ArgP (297 aa).

The 57-residue stretch at 4-60 (PDYRTLQALDAVIRERGFERAAQKLCITQSAVSQRIKQLENMFGQPLLVRTVPPRPT) folds into the HTH lysR-type domain. The segment at residues 21-40 (FERAAQKLCITQSAVSQRIK) is a DNA-binding region (H-T-H motif).

The protein belongs to the LysR transcriptional regulatory family. As to quaternary structure, homodimer.

In terms of biological role, controls the transcription of genes involved in arginine and lysine metabolism. This Salmonella typhi protein is HTH-type transcriptional regulator ArgP.